We begin with the raw amino-acid sequence, 352 residues long: MASSINGRKPSEIFKAQALLYKHIYAFIDSMSLKWAVEMNIPNIIQNHGKPISLSNLVSILQVPSSKIGNVRRLMRYLAHNGFFEIITKEEESYALTVASELLVRGSDLCLAPMVECVLDPTLSGSYHELKKWIYEEDLTLFGVTLGSGFWDFLDKNPEYNTSFNDAMASDSKLINLALRDCDFVFDGLESIVDVGGGTGTTAKIICETFPKLKCIVFDRPQVVENLSGSNNLTYVGGDMFTSIPNADAVLLKYILHNWTDKDCLRILKKCKEAVTNDGKRGKVTIIDMVIDEKKDENQVTQIKLLMDVNMACLNGKERNEEEWKKLFIEAGFQHYKISPLTGFLSLIEIYP.

Position 118–127 (118–127 (VLDPTLSGSY)) interacts with substrate. Residues G196, D219, D239, M240, and K253 each contribute to the S-adenosyl-L-methionine site. H257 acts as the Proton acceptor in catalysis.

The protein belongs to the class I-like SAM-binding methyltransferase superfamily. Cation-independent O-methyltransferase family. COMT subfamily. As to quaternary structure, homodimer.

The catalysed reaction is a 7-hydroxyisoflavone + S-adenosyl-L-methionine = a 7-methoxyisoflavone + S-adenosyl-L-homocysteine + H(+). The protein operates within phytoalexin biosynthesis; medicarpin biosynthesis. Transfers a methyl group to 7-hydroxyls of the isoflavones daidzein, genistein and 6,7,4'-trihydroxyisoflavone. Can also methylate (+)6a-hydroxymaackiain with lower efficiency. The polypeptide is Isoflavone-7-O-methyltransferase 6 (Medicago sativa (Alfalfa)).